We begin with the raw amino-acid sequence, 588 residues long: Putative calcium-binding mitochondrial carrier F55A11.4 (588 aa).

Positions Met1–Ala14 are enriched in polar residues. The tract at residues Met1 to Tyr25 is disordered. 4 consecutive EF-hand domains span residues Glu73 to His108, Ile109 to Leu139, Glu140 to Pro175, and Leu176 to Ser211. Ca(2+) is bound by residues Asp86, Asp88, Asp90, Thr92, and Asp97. Residues Asp153, Asn155, Asp157, and Glu164 each coordinate Ca(2+). Solcar repeat units lie at residues Gly246–Leu332, Ile342–Thr428, and Pro440–Gly529. 6 consecutive transmembrane segments (helical) span residues Leu252–Phe269, Gly307–Tyr326, Ser352–Met365, Gly403–Tyr422, Leu446–Phe463, and Gly504–Tyr523.

Belongs to the mitochondrial carrier (TC 2.A.29) family. As to quaternary structure, homodimer (via N-terminus).

It localises to the mitochondrion inner membrane. Functionally, mitochondrial and calcium-binding carrier that catalyzes the calcium-dependent exchange of cytoplasmic glutamate with mitochondrial aspartate across the mitochondrial inner membrane. The protein is Putative calcium-binding mitochondrial carrier F55A11.4 of Caenorhabditis elegans.